A 693-amino-acid chain; its full sequence is Polyribonucleotide nucleotidyltransferase (693 aa).

Mg(2+) contacts are provided by aspartate 490 and aspartate 496. In terms of domain architecture, KH spans 557 to 617; sequence PRISWFFIDP…EKVQEAVEYI (61 aa). In terms of domain architecture, S1 motif spans 627–691; the sequence is GDLYTGKVTR…DAGRLQFRRL (65 aa).

Belongs to the polyribonucleotide nucleotidyltransferase family. The cofactor is Mg(2+).

The protein resides in the cytoplasm. It catalyses the reaction RNA(n+1) + phosphate = RNA(n) + a ribonucleoside 5'-diphosphate. Involved in mRNA degradation. Catalyzes the phosphorolysis of single-stranded polyribonucleotides processively in the 3'- to 5'-direction. This chain is Polyribonucleotide nucleotidyltransferase, found in Fervidobacterium nodosum (strain ATCC 35602 / DSM 5306 / Rt17-B1).